Here is a 578-residue protein sequence, read N- to C-terminus: Acyl-CoA ligase AKT1 (578 aa).

Residues 210 to 218, 350 to 355, Asp438, Arg457, and Lys554 contribute to the ATP site; these read SSGTSGAQK and QCYGAT. Residues 281-350 are SBD1; the sequence is DVEDLLSIVE…RHHPTWKTKQ (70 aa). The segment at 351–413 is SBD2; that stretch reads CYGATEAGTA…VSSPSLAIGY (63 aa). The Peroxisomal targeting signal type 1 motif lies at 576-578; it reads SKI.

It is found in the peroxisome. The protein operates within mycotoxin biosynthesis. In terms of biological role, acyl-CoA ligase; part of the gene clusters that mediate the biosynthesis of the host-selective toxins (HSTs) AK-toxins responsible for Japanese pear black spot disease by the Japanese pear pathotype. AK-toxins are esters of 9,10-epoxy 8-hydroxy 9-methyldecatrienoic acid (EDA). On cellular level, AK-toxins affect plasma membrane of susceptible cells and cause a sudden increase in loss of K(+) after a few minutes of toxin treatment. The acyl-CoA ligase AKT1, the hydrolase AKT2 and enoyl-CoA hydratase AKT3 are all involved in the biosynthesis of the AK-, AF- and ACT-toxin common 9,10-epoxy-8-hydroxy-9-methyl-decatrienoic acid (EDA) structural moiety. Part of the EDA biosynthesis occurs in the peroxisome since these 3 enzymes are localized in peroxisomes. The exact roles of the 3 enzymes, as well as of additional AK-toxin clusters enzymes, including AKT4, AKT6 and AKTS1, have still to be elucidated. The Cytochrome P450 monooxygenase AKT7 on the other side functions to limit production of EDA and AK-toxin, probably via the catalysis of a side reaction of EDA or its precursor. The polypeptide is Acyl-CoA ligase AKT1 (Alternaria alternata (Alternaria rot fungus)).